The sequence spans 288 residues: Pyridoxal kinase PdxY (288 aa).

Residues Ser-12 and 47-48 contribute to the substrate site; that span reads TQ. Residues Asp-114, Glu-151, Lys-184, and 211 to 214 each bind ATP; that span reads RPLL. Asp-225 contributes to the substrate binding site.

Belongs to the pyridoxine kinase family. PdxY subfamily. In terms of assembly, homodimer. It depends on Mg(2+) as a cofactor.

The enzyme catalyses pyridoxal + ATP = pyridoxal 5'-phosphate + ADP + H(+). It functions in the pathway cofactor metabolism; pyridoxal 5'-phosphate salvage; pyridoxal 5'-phosphate from pyridoxal: step 1/1. Pyridoxal kinase involved in the salvage pathway of pyridoxal 5'-phosphate (PLP). Catalyzes the phosphorylation of pyridoxal to PLP. The chain is Pyridoxal kinase PdxY from Pseudomonas savastanoi pv. phaseolicola (strain 1448A / Race 6) (Pseudomonas syringae pv. phaseolicola (strain 1448A / Race 6)).